A 512-amino-acid polypeptide reads, in one-letter code: 2,3-bisphosphoglycerate-independent phosphoglycerate mutase (512 aa).

Mn(2+) is bound by residues D11 and S61. Catalysis depends on S61, which acts as the Phosphoserine intermediate. Substrate-binding positions include H122, 152–153 (RD), R184, R190, 259–262 (RADR), and K332. 5 residues coordinate Mn(2+): D399, H403, D440, H441, and H459.

This sequence belongs to the BPG-independent phosphoglycerate mutase family. In terms of assembly, monomer. The cofactor is Mn(2+).

The enzyme catalyses (2R)-2-phosphoglycerate = (2R)-3-phosphoglycerate. The protein operates within carbohydrate degradation; glycolysis; pyruvate from D-glyceraldehyde 3-phosphate: step 3/5. Its function is as follows. Catalyzes the interconversion of 2-phosphoglycerate and 3-phosphoglycerate. This Francisella tularensis subsp. tularensis (strain FSC 198) protein is 2,3-bisphosphoglycerate-independent phosphoglycerate mutase.